The primary structure comprises 315 residues: MAACVDKWPPAAYLCRLPEKFYCVLPDCTATDRPVVTASAAPAPAASGSSGDYVWDVLRAEAQDDADDEPLLRKFYHDLVLSRPSLESALASLLAAKLCIPGALPQDQLRDLLAGALAAHPEAGRAARADLVAARDRDPACAKMVHCFLYYKGFLALQAHRAAHALWSDNRRAPALLLQSRASEVFGVDIHPGARIGCGILLDHATGVVIGETAVVGYDVSILHGVTLGGTGKESGDRHPKVGDGVLIGAGASVLGNVHIGDGAKIGAGAVVLRDVADGTTAVGNPAKPIIGKKAAPQRRPEELPGVTMEQRWSD.

The disordered stretch occupies residues 287–315 (AKPIIGKKAAPQRRPEELPGVTMEQRWSD).

The protein belongs to the transferase hexapeptide repeat family. In terms of assembly, homomultimer.

The enzyme catalyses L-serine + acetyl-CoA = O-acetyl-L-serine + CoA. Its pathway is amino-acid biosynthesis; L-cysteine biosynthesis; L-cysteine from L-serine: step 1/2. This is Probable serine acetyltransferase 4 (SAT4) from Oryza sativa subsp. japonica (Rice).